The chain runs to 618 residues: Mitochondrial Rho GTPase 2 (618 aa).

At 1-591 (MKRDVRILLL…LNAVELGAAS (591 aa)) the chain is on the cytoplasmic side. The 167-residue stretch at 2–168 (KRDVRILLLG…FYYAQKAVLH (167 aa)) folds into the Miro 1 domain. Residues Gly-16, Lys-17, Thr-18, and Ser-19 each coordinate GTP. Thr-18 is a binding site for Mg(2+). Mg(2+) is bound by residues Pro-35 and Asp-57. 6 residues coordinate GTP: Ser-59, Asn-118, Lys-119, Asp-121, Ala-149, and Lys-150. EF-hand domains are found at residues 184 to 219 (ACSR…CFGN) and 304 to 339 (LGYQ…FPCM). The Ca(2+) site is built by Asp-197, Asp-199, Asn-201, Glu-208, Asp-317, Asp-319, Asp-321, and Glu-328. The 164-residue stretch at 416-579 (RNVFLCKVLG…YTKLATAATF (164 aa)) folds into the Miro 2 domain. Positions 428, 430, 431, 432, and 433 each coordinate GTP. Residue Ser-432 participates in Mg(2+) binding. Glu-474 provides a ligand contact to Mg(2+). The GTP site is built by Lys-528, Asp-530, and Cys-559. A helical; Anchor for type IV membrane protein membrane pass occupies residues 592–614 (FWLRVALGAAVTALVGFTLYRVL). The Mitochondrial intermembrane segment spans residues 615 to 618 (AKNK).

This sequence belongs to the mitochondrial Rho GTPase family. As to quaternary structure, homodimer.

Its subcellular location is the mitochondrion outer membrane. The catalysed reaction is GTP + H2O = GDP + phosphate + H(+). It catalyses the reaction ATP + H2O = ADP + phosphate + H(+). It carries out the reaction UTP + H2O = UDP + phosphate + H(+). In terms of biological role, atypical mitochondrial nucleoside-triphosphatase (NTPase) involved in mitochondrial trafficking. Probably involved in control of anterograde transport of mitochondria and their subcellular distribution. Can hydrolyze GTP, ATP and UTP. The polypeptide is Mitochondrial Rho GTPase 2 (RHOT2) (Gallus gallus (Chicken)).